A 229-amino-acid polypeptide reads, in one-letter code: Large ribosomal subunit protein uL1 (229 aa).

The protein belongs to the universal ribosomal protein uL1 family. As to quaternary structure, part of the 50S ribosomal subunit.

Binds directly to 23S rRNA. The L1 stalk is quite mobile in the ribosome, and is involved in E site tRNA release. In terms of biological role, protein L1 is also a translational repressor protein, it controls the translation of the L11 operon by binding to its mRNA. The sequence is that of Large ribosomal subunit protein uL1 from Histophilus somni (strain 129Pt) (Haemophilus somnus).